The primary structure comprises 293 residues: 4-hydroxy-tetrahydrodipicolinate synthase (293 aa).

Thr-47 provides a ligand contact to pyruvate. Catalysis depends on Tyr-135, which acts as the Proton donor/acceptor. Residue Lys-163 is the Schiff-base intermediate with substrate of the active site. Position 205 (Val-205) interacts with pyruvate.

It belongs to the DapA family. In terms of assembly, homotetramer; dimer of dimers.

The protein resides in the cytoplasm. It catalyses the reaction L-aspartate 4-semialdehyde + pyruvate = (2S,4S)-4-hydroxy-2,3,4,5-tetrahydrodipicolinate + H2O + H(+). It functions in the pathway amino-acid biosynthesis; L-lysine biosynthesis via DAP pathway; (S)-tetrahydrodipicolinate from L-aspartate: step 3/4. Functionally, catalyzes the condensation of (S)-aspartate-beta-semialdehyde [(S)-ASA] and pyruvate to 4-hydroxy-tetrahydrodipicolinate (HTPA). This is 4-hydroxy-tetrahydrodipicolinate synthase from Methylibium petroleiphilum (strain ATCC BAA-1232 / LMG 22953 / PM1).